A 133-amino-acid chain; its full sequence is Protein NrdI (133 aa).

It belongs to the NrdI family.

In terms of biological role, probably involved in ribonucleotide reductase function. The protein is Protein NrdI of Escherichia coli O17:K52:H18 (strain UMN026 / ExPEC).